The sequence spans 306 residues: MALRHFLTLRDLSSLELNSILDRASELKRQQHANQVYQPFKGKVLGMIFEKSSTRTRISFEAGICQFGGSAIFLSPRDTQLGRGEPIEDSARVISSMLDIVMIRTFGHNIVERFASFSKVPVINGLTDDHHPCQLLADLQTYQEHRGSIKGKTVAWIGDGNNMCNSYMEAAHMMGFKLKVGSPKGYEPKPEFLAEFAHCVEVFNSAEDAAVNADLIVTDVWASMGQEEEQKLREKAFLTFQVNEALMALAHPECLFMHCLPAHRGEEISENMLDHKNSVVWDEAENRLHAQKALMEFLLNENAKRA.

Carbamoyl phosphate is bound by residues 53 to 56 (STRT), glutamine 80, arginine 104, and 131 to 134 (HPCQ). L-ornithine contacts are provided by residues asparagine 162, aspartate 219, and 223 to 224 (SM). Carbamoyl phosphate is bound by residues 259-260 (CL) and arginine 287.

Belongs to the aspartate/ornithine carbamoyltransferase superfamily. OTCase family.

Its subcellular location is the cytoplasm. The enzyme catalyses carbamoyl phosphate + L-ornithine = L-citrulline + phosphate + H(+). Its pathway is amino-acid biosynthesis; L-arginine biosynthesis; L-arginine from L-ornithine and carbamoyl phosphate: step 1/3. Its function is as follows. Reversibly catalyzes the transfer of the carbamoyl group from carbamoyl phosphate (CP) to the N(epsilon) atom of ornithine (ORN) to produce L-citrulline. This chain is Ornithine carbamoyltransferase, found in Acinetobacter baylyi (strain ATCC 33305 / BD413 / ADP1).